Consider the following 87-residue polypeptide: U15-lycotoxin-Ls1f (87 aa).

The signal sequence occupies residues 1–20 (MNSKIFAVLLLLAFLSCVLS). Residues 21–66 (DQYCPKSSITACKKMNIRNDCCKDDDCTGGSWCCATPCGNFCKYPT) form the WAP domain. Disulfide bonds link Cys24–Cys54, Cys32–Cys58, Cys41–Cys53, Cys42–Cys80, and Cys47–Cys62.

The protein belongs to the venom protein 11 family. 01 (wap-1) subfamily. In terms of processing, contains 5 disulfide bonds. Expressed by the venom gland.

It is found in the secreted. Has antibacterial activity. This chain is U15-lycotoxin-Ls1f, found in Lycosa singoriensis (Wolf spider).